Consider the following 235-residue polypeptide: Aspartate/glutamate leucyltransferase (235 aa).

This sequence belongs to the R-transferase family. Bpt subfamily.

It localises to the cytoplasm. The catalysed reaction is N-terminal L-glutamyl-[protein] + L-leucyl-tRNA(Leu) = N-terminal L-leucyl-L-glutamyl-[protein] + tRNA(Leu) + H(+). It catalyses the reaction N-terminal L-aspartyl-[protein] + L-leucyl-tRNA(Leu) = N-terminal L-leucyl-L-aspartyl-[protein] + tRNA(Leu) + H(+). Functions in the N-end rule pathway of protein degradation where it conjugates Leu from its aminoacyl-tRNA to the N-termini of proteins containing an N-terminal aspartate or glutamate. The sequence is that of Aspartate/glutamate leucyltransferase from Stutzerimonas stutzeri (strain A1501) (Pseudomonas stutzeri).